The sequence spans 678 residues: Glycine--tRNA ligase beta subunit (678 aa).

The protein belongs to the class-II aminoacyl-tRNA synthetase family. In terms of assembly, tetramer of two alpha and two beta subunits.

Its subcellular location is the cytoplasm. The enzyme catalyses tRNA(Gly) + glycine + ATP = glycyl-tRNA(Gly) + AMP + diphosphate. The polypeptide is Glycine--tRNA ligase beta subunit (Streptococcus suis (strain 98HAH33)).